Reading from the N-terminus, the 85-residue chain is UPF0298 protein SUB0431 (85 aa).

The protein belongs to the UPF0298 family.

It is found in the cytoplasm. This Streptococcus uberis (strain ATCC BAA-854 / 0140J) protein is UPF0298 protein SUB0431.